Reading from the N-terminus, the 206-residue chain is Small ribosomal subunit protein uS5 (206 aa).

A disordered region spans residues 1–42; the sequence is MENKTEVVVAENANNQTQPERKKFDRKPNRRPQGPKQFQKDD. The S5 DRBM domain occupies 43–106; sequence FEEKVVTIRR…KEAKKNLIRV (64 aa).

This sequence belongs to the universal ribosomal protein uS5 family. Part of the 30S ribosomal subunit. Contacts proteins S4 and S8.

Its function is as follows. With S4 and S12 plays an important role in translational accuracy. In terms of biological role, located at the back of the 30S subunit body where it stabilizes the conformation of the head with respect to the body. This Mesoplasma florum (strain ATCC 33453 / NBRC 100688 / NCTC 11704 / L1) (Acholeplasma florum) protein is Small ribosomal subunit protein uS5.